Reading from the N-terminus, the 81-residue chain is Small ribosomal subunit protein bS16 (81 aa).

Belongs to the bacterial ribosomal protein bS16 family.

In Alkaliphilus oremlandii (strain OhILAs) (Clostridium oremlandii (strain OhILAs)), this protein is Small ribosomal subunit protein bS16.